Reading from the N-terminus, the 391-residue chain is Phosphoglycerate kinase (391 aa).

Substrate-binding positions include 21-23 (DLN), arginine 36, 59-62 (HLGR), arginine 113, and arginine 146. ATP contacts are provided by residues lysine 197, glutamate 319, and 345 to 348 (GGDT).

It belongs to the phosphoglycerate kinase family. As to quaternary structure, monomer.

The protein localises to the cytoplasm. It carries out the reaction (2R)-3-phosphoglycerate + ATP = (2R)-3-phospho-glyceroyl phosphate + ADP. It participates in carbohydrate degradation; glycolysis; pyruvate from D-glyceraldehyde 3-phosphate: step 2/5. This chain is Phosphoglycerate kinase, found in Shewanella baltica (strain OS195).